A 493-amino-acid polypeptide reads, in one-letter code: FAD-linked oxidoreductase tazL (493 aa).

The N-terminal stretch at 1-17 (MRSNTVILAALPLVASA) is a signal peptide. N29, N41, N53, N91, N253, N318, and N387 each carry an N-linked (GlcNAc...) asparagine glycan. Residues 63–235 (WAEPTFAVTI…TSATYEIFDA (173 aa)) form the FAD-binding PCMH-type domain.

It belongs to the oxygen-dependent FAD-linked oxidoreductase family.

It participates in secondary metabolite biosynthesis. In terms of biological role, FAD-linked oxidoreductase; part of the gene cluster that mediates the biosynthesis of azaterrilone A and other azaphilones, a class of fungal metabolites characterized by a highly oxygenated pyrano-quinone bicyclic core and exhibiting a broad range of bioactivities. The first step of the pathway begins with the non-reducing polyketide synthase tazA that assembles one acetyl-CoA starter unit, five malonyl-CoA units, and catalyzes a series of Claisen condensations, methylation, PT-mediated cyclization, and finally releases the first hexaketide precursor through the R-domain. The tazA product then undergoes reduction on its terminal ketone and the following pyran-ring formation by yet undetermined enzyme(s). Dehydration and enoyl reduction, possibly involving the trans-enoyl reductase tazE leads to the next intermediate. TazD is predicted as an acetyltransferase and might catalyze the acetylation steps leading to the synthesis of azaterrilone A. Azaterrilone A is not the final product of the taz pathway and both the highly reducing polyketide synthase tazB and the dual enzyme tazHJ catalyze late steps of the pathway, leading to the production of the 2 final stereoisomers that contain additional polyketide modification whose structures have still to be determined. This Aspergillus terreus (strain NIH 2624 / FGSC A1156) protein is FAD-linked oxidoreductase tazL.